A 509-amino-acid chain; its full sequence is MLTSDPSESTAHLQRTISNLSARNAKLAELLKASRDKLSILQDQLEDLAAPPSTYGTFLEFSGGRETAEVFTAGRHMRLRISPDVEKAELVPGVQVRLGEASQVVEVCDISTTGQLATLVELLADNRGLICDHTGEERVVKLAAALTEGVDKLPKAGDTLLVDPRAGYAFEVIPKTEVSTLALEEVPDVTYADIGGLNSQIELIHDAVELPFTQPDLYRAYDLKPPKGVLLYGPPGCGKTLIAKAVANSLAQRIGAGNRSYFINVKGPELLNKYVGETERRIRLIFERARELAEEGRPVIVFFDEMESIFRTRGSGVSSDMETTVVPQLLTELDGVESLSNVIIIGATNREELIDPAILRPGRLDVKIRVERPDKQAARDVFARHLKQNIPTAEPIDSLINNAVDHLYADNPYVELSLIDGSTEILHYRDFVSGAMIANIVDRAKKCAIKDHIAGRHSGVASEHLIAAINAENHESEDLPNTSNPDDWSRIIGRHGLRVAHARVLGGQR.

Positions 11-50 (AHLQRTISNLSARNAKLAELLKASRDKLSILQDQLEDLAA) form a coiled coil. 236-241 (GCGKTL) lines the ATP pocket.

The protein belongs to the AAA ATPase family. In terms of assembly, homohexamer. Assembles into a hexameric ring structure.

The polypeptide is AAA ATPase forming ring-shaped complexes (Corynebacterium diphtheriae (strain ATCC 700971 / NCTC 13129 / Biotype gravis)).